Reading from the N-terminus, the 330-residue chain is Membrane progestin receptor gamma (330 aa).

Topologically, residues 1 to 51 are cytoplasmic; sequence MLSLKLPRLFRIDQVPQVFHEQGILFGYRHPQSSATACILSLFQMTNETLN. Residues 52 to 72 traverse the membrane as a helical segment; it reads IWTHLLPFWFFVWRFMTALYV. Topologically, residues 73–81 are extracellular; sequence TDIQNDSYS. A helical transmembrane segment spans residues 82–101; sequence WPMLVYMCTSCVYPLASSCA. Over 102–113 the chain is Cytoplasmic; that stretch reads HTFSSMSKNARH. The helical transmembrane segment at 114–134 threads the bilayer; sequence ICYFLDYGAVNLFSLGSAIAY. The Extracellular segment spans residues 135–141; it reads SAYTFPD. Residues 142-162 traverse the membrane as a helical segment; the sequence is ALVCSTFHECYVALAVLNTIL. At 163–186 the chain is on the cytoplasmic side; sequence STGLSCYSRFLELQKPRLCKLLRV. The chain crosses the membrane as a helical span at residues 187-207; sequence LAFAYPYTWDSLPIFYRLFLF. The Extracellular portion of the chain corresponds to 208–253; that stretch reads PGESSRNEAMLYHQKHMGMTLLASFFYSAHLPERLAPGRFDYIGHS. The helical transmembrane segment at 254 to 274 threads the bilayer; sequence HQLFHVCVILATHLQMEAILL. Residues 275–294 are Cytoplasmic-facing; that stretch reads DKTLRREWLLATSRPFSFPQ. A helical membrane pass occupies residues 295 to 315; it reads IAAAMLLCIIFSLSNIIYFSA. The Extracellular segment spans residues 316-330; the sequence is ALYRIPEPELHEKET.

The protein belongs to the ADIPOR family.

It localises to the cell membrane. Plasma membrane progesterone (P4) receptor coupled to G proteins. Seems to act through a G(i) mediated pathway. May be involved in oocyte maturation. This Mus musculus (Mouse) protein is Membrane progestin receptor gamma.